The sequence spans 102 residues: Parathymosin (102 aa).

The interval 1-102 (MSEKSVEAAA…RQKTENGASA (102 aa)) is disordered. Serine 2 carries the post-translational modification N-acetylserine. Position 2 is a phosphoserine (serine 2). Lysine 4 bears the N6-acetyllysine mark. Serine 5 and serine 13 each carry phosphoserine. The span at 13-37 (SAKDLKEKKEKVEEKASRKERKKEV) shows a compositional bias: basic and acidic residues. N6-acetyllysine is present on lysine 15. Over residues 38–76 (VEEEENGAEEEEEETAEDGEEEDEGEEEDEEEEEEDDEG) the composition is skewed to acidic residues. Threonine 52 is modified (phosphothreonine). The residue at position 92 (lysine 92) is an N6-acetyllysine.

This sequence belongs to the pro/parathymosin family.

Functionally, parathymosin may mediate immune function by blocking the effect of prothymosin alpha which confers resistance to certain opportunistic infections. The protein is Parathymosin (PTMS) of Homo sapiens (Human).